Here is a 125-residue protein sequence, read N- to C-terminus: Putative oxygen-evolving enhancer protein 2-2 (125 aa).

Phosphoserine is present on S15.

It belongs to the PsbP family.

The protein is Putative oxygen-evolving enhancer protein 2-2 (PSBP2) of Arabidopsis thaliana (Mouse-ear cress).